The following is a 149-amino-acid chain: Large ribosomal subunit protein bL9 (149 aa).

It belongs to the bacterial ribosomal protein bL9 family.

Binds to the 23S rRNA. In Edwardsiella ictaluri (strain 93-146), this protein is Large ribosomal subunit protein bL9.